Here is a 514-residue protein sequence, read N- to C-terminus: Cytochrome P450 monooxygenase ptmQ (514 aa).

The helical transmembrane segment at 3–23 (YVAQSPWIATLIVTATTYCTL) threads the bilayer. Residue Asn148 is glycosylated (N-linked (GlcNAc...) asparagine). Cys452 provides a ligand contact to heme. An N-linked (GlcNAc...) asparagine glycan is attached at Asn486.

Belongs to the cytochrome P450 family. Requires heme as cofactor.

It is found in the membrane. The protein operates within secondary metabolite biosynthesis. Cytochrome P450 monooxygenase; part of the gene cluster that mediates the biosynthesis of the indole diterpenes penitrems. The geranylgeranyl diphosphate (GGPP) synthase ptmG catalyzes the first step in penitrem biosynthesis via conversion of farnesyl pyrophosphate and isopentyl pyrophosphate into geranylgeranyl pyrophosphate (GGPP). Condensation of indole-3-glycerol phosphate with GGPP by the prenyl transferase ptmC then forms 3-geranylgeranylindole (3-GGI). Epoxidation by the FAD-dependent monooxygenase ptmM leads to a epoxidized-GGI that is substrate of the terpene cyclase ptmB for cyclization to yield paspaline. Paspaline is subsequently converted to 13-desoxypaxilline by the cytochrome P450 monooxygenase ptmP, the latter being then converted to paxilline by the cytochrome P450 monooxygenase ptmQ. Paxilline is converted to beta-paxitriol via C-10 ketoreduction by the short-chain dehydrogenase ptmH which can be monoprenylated at the C-20 by the indole diterpene prenyltransferase ptmD. A two-step elimination (acetylation and elimination) process performed by the O-acetyltransferase ptmV and ptmI leads to the production of the prenylated form of penijanthine. The FAD-linked oxidoreductase ptmO then converts the prenylated form of penijanthine into PC-M5 which is in turn transformed into PC-M4 by the aromatic dimethylallyltransferase ptmE. Five sequential oxidative transformations performed by the cytochrome P450 monooxygenases ptmK, ptmU, ptmL, ptmN and ptmJ yield the various penitrem compounds. PtmK, ptmU and ptmM are involved in the formation of the key bicyclic ring of penitrem C via the formation of the intermediates secopenitrem D and penitrem D. PtmL catalyzes the epoxidation of penitrem D and C to yield penitrem B and F, respectively. PtmJ catalyzes the last benzylic hydroxylation to convert penitrem B to prenitrem E and penitrem F to penitrem A. The protein is Cytochrome P450 monooxygenase ptmQ of Penicillium ochrochloron.